An 809-amino-acid polypeptide reads, in one-letter code: Hydrazine synthase subunit alpha (809 aa).

An N-terminal signal peptide occupies residues 1-27 (MGKRKLGVIASAFVAGALVCGSTLVNA). A Zn(2+)-binding site is contributed by Cys-303. Residues Cys-583 and Cys-586 each contribute to the heme site. His-587 contributes to the Zn(2+) binding site. Positions 591, 685, 688, 689, and 772 each coordinate heme. Positions 633-792 (KGVKHGEDVV…AIVEWIDLGA (160 aa)) constitute a Cytochrome c domain.

In terms of assembly, part of the hydrazine synthase complex that forms an elongated dimer of heterotrimers composed of one alpha, one beta and one gamma subunit. The cofactor is heme c.

The protein resides in the anammoxosome. The enzyme catalyses hydrazine + 3 Fe(III)-[cytochrome c] + H2O = nitric oxide + 3 Fe(II)-[cytochrome c] + NH4(+) + 2 H(+). It functions in the pathway nitrogen metabolism. Its function is as follows. Component of the hydrazine synthase complex that catalyzes the condensation of nitric oxide (NO) with ammonium to form hydrazine. The alpha subunit catalyzes the second half-reaction, i.e. the condensation of hydroxylamine formed in the active site of the gamma subunit with ammonia, yielding hydrazine. Is involved in anaerobic ammonium oxidation (anammox), a biological process in which nitrite is used as the electron acceptor in the conversion of ammonium to dinitrogen gas (N2) and water; this bacterial process has a major role in the Earth's nitrogen cycle and has been estimated to synthesize up to 50% of the dinitrogen gas emitted into our atmosphere from the oceans. The protein is Hydrazine synthase subunit alpha of Kuenenia stuttgartiensis.